We begin with the raw amino-acid sequence, 165 residues long: NADPH-dependent 7-cyano-7-deazaguanine reductase (165 aa).

The Thioimide intermediate role is filled by C56. The active-site Proton donor is D63. Substrate-binding positions include 78 to 80 (VES) and 97 to 98 (HE).

Belongs to the GTP cyclohydrolase I family. QueF type 1 subfamily.

It is found in the cytoplasm. It catalyses the reaction 7-aminomethyl-7-carbaguanine + 2 NADP(+) = 7-cyano-7-deazaguanine + 2 NADPH + 3 H(+). Its pathway is tRNA modification; tRNA-queuosine biosynthesis. Catalyzes the NADPH-dependent reduction of 7-cyano-7-deazaguanine (preQ0) to 7-aminomethyl-7-deazaguanine (preQ1). The sequence is that of NADPH-dependent 7-cyano-7-deazaguanine reductase from Bacillus thuringiensis subsp. konkukian (strain 97-27).